The primary structure comprises 320 residues: Polyisoprenyl-teichoic acid--peptidoglycan teichoic acid transferase TagU (320 aa).

Residues M1–K15 lie on the Cytoplasmic side of the membrane. The chain crosses the membrane as a helical; Signal-anchor for type II membrane protein span at residues W16–F36. Residues L37 to Q320 are Extracellular-facing.

Belongs to the LytR/CpsA/Psr (LCP) family.

It localises to the cell membrane. It functions in the pathway cell wall biogenesis. Functionally, may catalyze the final step in cell wall teichoic acid biosynthesis, the transfer of the anionic cell wall polymers (APs) from their lipid-linked precursor to the cell wall peptidoglycan (PG). This chain is Polyisoprenyl-teichoic acid--peptidoglycan teichoic acid transferase TagU, found in Oceanobacillus iheyensis (strain DSM 14371 / CIP 107618 / JCM 11309 / KCTC 3954 / HTE831).